Reading from the N-terminus, the 273-residue chain is Phosphatidylglycerol--prolipoprotein diacylglyceryl transferase (273 aa).

7 helical membrane passes run 21 to 41 (VSIR…LWLA), 60 to 80 (LLFA…VIFY), 95 to 115 (VWTG…AMFW), 124 to 144 (FFGV…MGRM), 176 to 196 (SQLY…NWFI), 203 to 223 (GSVS…VEFV), and 237 to 257 (ISMG…MMVW). Arg-143 serves as a coordination point for a 1,2-diacyl-sn-glycero-3-phospho-(1'-sn-glycerol).

It belongs to the Lgt family.

It localises to the cell inner membrane. It catalyses the reaction L-cysteinyl-[prolipoprotein] + a 1,2-diacyl-sn-glycero-3-phospho-(1'-sn-glycerol) = an S-1,2-diacyl-sn-glyceryl-L-cysteinyl-[prolipoprotein] + sn-glycerol 1-phosphate + H(+). It functions in the pathway protein modification; lipoprotein biosynthesis (diacylglyceryl transfer). Catalyzes the transfer of the diacylglyceryl group from phosphatidylglycerol to the sulfhydryl group of the N-terminal cysteine of a prolipoprotein, the first step in the formation of mature lipoproteins. This is Phosphatidylglycerol--prolipoprotein diacylglyceryl transferase from Vibrio parahaemolyticus serotype O3:K6 (strain RIMD 2210633).